The primary structure comprises 73 residues: Large ribosomal subunit protein bL31 (73 aa).

The Zn(2+) site is built by cysteine 16, cysteine 18, cysteine 37, and cysteine 40.

Belongs to the bacterial ribosomal protein bL31 family. Type A subfamily. In terms of assembly, part of the 50S ribosomal subunit. Zn(2+) serves as cofactor.

Binds the 23S rRNA. The sequence is that of Large ribosomal subunit protein bL31 from Marinobacter nauticus (strain ATCC 700491 / DSM 11845 / VT8) (Marinobacter aquaeolei).